An 81-amino-acid polypeptide reads, in one-letter code: Small ribosomal subunit protein bS20 (81 aa).

This sequence belongs to the bacterial ribosomal protein bS20 family.

Functionally, binds directly to 16S ribosomal RNA. This is Small ribosomal subunit protein bS20 from Mycoplasma mycoides subsp. mycoides SC (strain CCUG 32753 / NCTC 10114 / PG1).